Consider the following 174-residue polypeptide: MSNSNYQVSLERIKKVVPEELLTNALLAAIDNSGERMSQIIVDKKDNGNDYYLTIHRFFVYSNEEFTAFDKEDVADVEFVNGTPDGEVIITLKDGKVLHPSHICYGRAFDFIQDVKPKVITMAGYDSTIRGEFPQLLDPDHAEEIDRLRRWMQDGNISHYEYDDANPAYPKAGK.

The polypeptide is Protein HdcB (hdcB) (Lactobacillus sp. (strain 30a)).